We begin with the raw amino-acid sequence, 45 residues long: Cytochrome b559 subunit beta (45 aa).

Residues 20–36 (WIAVHTLAVPTVFFLGA) traverse the membrane as a helical segment. Heme is bound at residue H24.

It belongs to the PsbE/PsbF family. Heterodimer of an alpha subunit and a beta subunit. PSII is composed of 1 copy each of membrane proteins PsbA, PsbB, PsbC, PsbD, PsbE, PsbF, PsbH, PsbI, PsbJ, PsbK, PsbL, PsbM, PsbT, PsbX, PsbY, PsbZ, Psb30/Ycf12, peripheral proteins PsbO, CyanoQ (PsbQ), PsbU, PsbV and a large number of cofactors. It forms dimeric complexes. The cofactor is heme b.

It localises to the cellular thylakoid membrane. This b-type cytochrome is tightly associated with the reaction center of photosystem II (PSII). PSII is a light-driven water:plastoquinone oxidoreductase that uses light energy to abstract electrons from H(2)O, generating O(2) and a proton gradient subsequently used for ATP formation. It consists of a core antenna complex that captures photons, and an electron transfer chain that converts photonic excitation into a charge separation. The chain is Cytochrome b559 subunit beta from Nostoc sp. (strain PCC 7120 / SAG 25.82 / UTEX 2576).